Here is a 528-residue protein sequence, read N- to C-terminus: OLD nuclease (528 aa).

The interval 1–153 (MLKRLQVKNF…LAQHLPSIRG (153 aa)) is ATPase domain N-terminus. An ATP-binding site is contributed by 31 to 35 (GAGKT). The interval 154–245 (SILGRLLQPV…RESDLTLPGD (92 aa)) is dimerization domain. The interval 246 to 369 (ELGLGIQSAI…FDTARNEVLF (124 aa)) is ATPase domain C-terminus. The interval 370–528 (AKRALLVEGY…IRQVTRPMEE (159 aa)) is toprim domain. 4 residues coordinate a divalent metal cation: glutamate 377, aspartate 381, aspartate 431, and aspartate 433. Residues 440 to 461 (RADEETRRKQEQENKAEQEKNQ) form a disordered region. A divalent metal cation-binding residues include serine 478 and glutamate 480. Residue arginine 487 is the Stabilizes transition state or protonates leaving group of the active site.

This sequence belongs to the class 1 OLD nuclease family. In terms of assembly, homodimer. It depends on Mg(2+) as a cofactor. Requires Mn(2+) as cofactor. The cofactor is Ca(2+).

The enzyme catalyses Exonucleolytic cleavage in the 5'- to 3'-direction to yield nucleoside 5'-phosphates.. In terms of biological role, an exodeoxyribonuclease that degrades linear or supercoiled dsDNA from 5'-3'. Nicks and linearizes circular DNA. Activity is not stimulated by ATP or AMP-PNP, although it has DNA-stimulated ATPase activity. This chain is OLD nuclease, found in Thermus scotoductus (strain ATCC 700910 / SA-01).